A 95-amino-acid chain; its full sequence is uncharacterized protein (95 aa).

A signal peptide spans Met1–Ala21.

This is an uncharacterized protein from Haemophilus influenzae (strain ATCC 51907 / DSM 11121 / KW20 / Rd).